The following is a 231-amino-acid chain: Large ribosomal subunit protein uL1 (231 aa).

The protein belongs to the universal ribosomal protein uL1 family. Part of the 50S ribosomal subunit.

In terms of biological role, binds directly to 23S rRNA. The L1 stalk is quite mobile in the ribosome, and is involved in E site tRNA release. Protein L1 is also a translational repressor protein, it controls the translation of the L11 operon by binding to its mRNA. The chain is Large ribosomal subunit protein uL1 from Pseudomonas fluorescens (strain ATCC BAA-477 / NRRL B-23932 / Pf-5).